Reading from the N-terminus, the 1071-residue chain is ATP-dependent helicase/deoxyribonuclease subunit B (1071 aa).

This sequence belongs to the helicase family. AddB/RexB type 2 subfamily. In terms of assembly, heterodimer of AddA and RexB. The cofactor is Mg(2+).

The heterodimer acts as both an ATP-dependent DNA helicase and an ATP-dependent, dual-direction single-stranded exonuclease. Recognizes the chi site generating a DNA molecule suitable for the initiation of homologous recombination. This subunit has 5' -&gt; 3' nuclease activity but not helicase activity. The chain is ATP-dependent helicase/deoxyribonuclease subunit B from Streptococcus pyogenes serotype M3 (strain ATCC BAA-595 / MGAS315).